A 352-amino-acid polypeptide reads, in one-letter code: Cuticle collagen dpy-17 (352 aa).

An N-terminal signal peptide occupies residues 1–29; sequence MSVFAGYAACTLGAVSMLLCVSLVPQVYQ. Positions 61–64 are furin-like endopeptidase recognition region; sequence RVRR. Disordered regions lie at residues 73 to 143 and 156 to 352; these read GGYG…GPGD and GPAG…GYRN. A compositionally biased stretch (gly residues) spans 87–97; sequence GPHGGFPGGPQ. 4 triple-helical region regions span residues 156-182, 202-264, 267-290, and 294-329; these read GPAG…DGED, GPQG…DVEH, GLPG…QGDR, and GIAG…PGQD. Residues 202–259 enclose the Collagen-like domain; that stretch reads GPQGPPGSQGKPGARGMRGARGQAAMPGRDGSPGMPGSLGPIGPPGAAGEEGPTGEPG. Low complexity predominate over residues 207–259; it reads PGSQGKPGARGMRGARGQAAMPGRDGSPGMPGSLGPIGPPGAAGEEGPTGEPG. The segment covering 337–352 has biased composition (polar residues); the sequence is QRNTNAAVSGNQGYRN.

The protein belongs to the cuticular collagen family. As to quaternary structure, collagen polypeptide chains are complexed within the cuticle by disulfide bonds and other types of covalent cross-links.

Its subcellular location is the secreted. The protein localises to the extracellular space. In terms of biological role, secreted collagen that forms part of the nematode cuticle, which functions as an exoskeleton and a barrier to protect the worm from its environment. Secretion and subsequent incorporation into the cuticle is likely mediated by bli-4, which probably cleaves at the N-terminal consensus furin cleavage site. This is Cuticle collagen dpy-17 from Caenorhabditis elegans.